The following is a 336-amino-acid chain: Ketol-acid reductoisomerase (NADP(+)) (336 aa).

The KARI N-terminal Rossmann domain maps to 3 to 183 (ATMYYDRDVS…GGTRAGVLET (181 aa)). Residues 26-29 (YGSQ), Arg-49, Ser-52, Ser-54, and 84-87 (DETQ) each bind NADP(+). The active site involves His-109. Position 135 (Gly-135) interacts with NADP(+). In terms of domain architecture, KARI C-terminal knotted spans 184-329 (TFKEETETDL…RELRSKMPFI (146 aa)). 4 residues coordinate Mg(2+): Asp-192, Glu-196, Glu-228, and Glu-232. Substrate is bound at residue Ser-253.

Belongs to the ketol-acid reductoisomerase family. Requires Mg(2+) as cofactor.

The enzyme catalyses (2R)-2,3-dihydroxy-3-methylbutanoate + NADP(+) = (2S)-2-acetolactate + NADPH + H(+). It catalyses the reaction (2R,3R)-2,3-dihydroxy-3-methylpentanoate + NADP(+) = (S)-2-ethyl-2-hydroxy-3-oxobutanoate + NADPH + H(+). The protein operates within amino-acid biosynthesis; L-isoleucine biosynthesis; L-isoleucine from 2-oxobutanoate: step 2/4. Its pathway is amino-acid biosynthesis; L-valine biosynthesis; L-valine from pyruvate: step 2/4. Involved in the biosynthesis of branched-chain amino acids (BCAA). Catalyzes an alkyl-migration followed by a ketol-acid reduction of (S)-2-acetolactate (S2AL) to yield (R)-2,3-dihydroxy-isovalerate. In the isomerase reaction, S2AL is rearranged via a Mg-dependent methyl migration to produce 3-hydroxy-3-methyl-2-ketobutyrate (HMKB). In the reductase reaction, this 2-ketoacid undergoes a metal-dependent reduction by NADPH to yield (R)-2,3-dihydroxy-isovalerate. This Deinococcus geothermalis (strain DSM 11300 / CIP 105573 / AG-3a) protein is Ketol-acid reductoisomerase (NADP(+)).